Reading from the N-terminus, the 347-residue chain is UDP-N-acetylenolpyruvoylglucosamine reductase (347 aa).

The region spanning 16 to 187 (AIEQCSHYLV…IAVGLKLPKT (172 aa)) is the FAD-binding PCMH-type domain. Arg-163 is a catalytic residue. Ser-233 acts as the Proton donor in catalysis. Residue Glu-328 is part of the active site.

The protein belongs to the MurB family. The cofactor is FAD.

It is found in the cytoplasm. It catalyses the reaction UDP-N-acetyl-alpha-D-muramate + NADP(+) = UDP-N-acetyl-3-O-(1-carboxyvinyl)-alpha-D-glucosamine + NADPH + H(+). The protein operates within cell wall biogenesis; peptidoglycan biosynthesis. In terms of biological role, cell wall formation. This chain is UDP-N-acetylenolpyruvoylglucosamine reductase, found in Vibrio vulnificus (strain CMCP6).